A 308-amino-acid chain; its full sequence is MAEKIKIGTMWLGGCSGCHLSIADFHEKLLDVMEHADFEFSPVLMDTKYDEIPELDVVVIEGGIVNDENREFAEELREKAKFVISYGTCAVYGGIPGLRNLWDKDEVIEEAYINSITTPNEEGVIPSEDVPHLEGRVKPLGEVIDVDFEVPGCPPRSDVAAEVVMALLKGEEIELPSTNLCEVCPREKPPEGLAMDFIKRQFEVGKPEDDLCLIPQGLICMGPATVSICGAECPSIAIPCRGCYGPTARVEDQGAKMISAIASDYKVEEDKTVDPEEVAEQLDDIVGTFYTFTLPAALIPMKIKKEGK.

Belongs to the [NiFe]/[NiFeSe] hydrogenase small subunit family. In terms of assembly, the F420-non-reducing hydrogenase is composed of three subunits; MvhA, MvhD and MvhG. It forms a complex with the heterodisulfide reductase (hdr).

In terms of biological role, part of a complex that provides reducing equivalents for heterodisulfide reductase. This is F420-non-reducing hydrogenase subunit G (mvhG) from Methanothermobacter marburgensis (strain ATCC BAA-927 / DSM 2133 / JCM 14651 / NBRC 100331 / OCM 82 / Marburg) (Methanobacterium thermoautotrophicum).